The chain runs to 297 residues: uncharacterized protein (297 aa).

The protein belongs to the glycosyltransferase 2 family.

This is an uncharacterized protein from Mycoplasma genitalium (strain ATCC 33530 / DSM 19775 / NCTC 10195 / G37) (Mycoplasmoides genitalium).